Consider the following 533-residue polypeptide: UDP-glucuronosyltransferase 1-2 (533 aa).

The N-terminal stretch at 1-27 is a signal peptide; it reads MDTGLCAPLRGLSGLLLLLCALPWAEG. Asparagine 133, asparagine 141, asparagine 295, and asparagine 433 each carry an N-linked (GlcNAc...) asparagine glycan. The chain crosses the membrane as a helical span at residues 491 to 507; sequence VIGFLLAIVLTVVFIVY.

The protein belongs to the UDP-glycosyltransferase family.

Its subcellular location is the microsome. The protein resides in the endoplasmic reticulum membrane. It catalyses the reaction glucuronate acceptor + UDP-alpha-D-glucuronate = acceptor beta-D-glucuronoside + UDP + H(+). Its function is as follows. UDPGT is of major importance in the conjugation and subsequent elimination of potentially toxic xenobiotics and endogenous compounds. The sequence is that of UDP-glucuronosyltransferase 1-2 (Ugt1a2) from Rattus norvegicus (Rat).